The sequence spans 141 residues: Nucleoside diphosphate kinase (141 aa).

ATP is bound by residues lysine 11, phenylalanine 59, arginine 87, threonine 93, arginine 104, and asparagine 114. Histidine 117 acts as the Pros-phosphohistidine intermediate in catalysis.

This sequence belongs to the NDK family. In terms of assembly, homotetramer. The cofactor is Mg(2+).

The protein resides in the cytoplasm. The enzyme catalyses a 2'-deoxyribonucleoside 5'-diphosphate + ATP = a 2'-deoxyribonucleoside 5'-triphosphate + ADP. It carries out the reaction a ribonucleoside 5'-diphosphate + ATP = a ribonucleoside 5'-triphosphate + ADP. Functionally, major role in the synthesis of nucleoside triphosphates other than ATP. The ATP gamma phosphate is transferred to the NDP beta phosphate via a ping-pong mechanism, using a phosphorylated active-site intermediate. The sequence is that of Nucleoside diphosphate kinase from Ralstonia pickettii (strain 12J).